A 427-amino-acid polypeptide reads, in one-letter code: 3-isopropylmalate dehydratase large subunit (427 aa).

3 residues coordinate [4Fe-4S] cluster: cysteine 308, cysteine 368, and cysteine 371.

This sequence belongs to the aconitase/IPM isomerase family. LeuC type 2 subfamily. In terms of assembly, heterodimer of LeuC and LeuD. It depends on [4Fe-4S] cluster as a cofactor.

The enzyme catalyses (2R,3S)-3-isopropylmalate = (2S)-2-isopropylmalate. It functions in the pathway amino-acid biosynthesis; L-leucine biosynthesis; L-leucine from 3-methyl-2-oxobutanoate: step 2/4. Its function is as follows. Catalyzes the isomerization between 2-isopropylmalate and 3-isopropylmalate, via the formation of 2-isopropylmaleate. The sequence is that of 3-isopropylmalate dehydratase large subunit from Geotalea uraniireducens (strain Rf4) (Geobacter uraniireducens).